We begin with the raw amino-acid sequence, 161 residues long: Large ribosomal subunit protein uL15 (161 aa).

Residues methionine 1–glutamine 39 form a disordered region. The span at arginine 22–valine 36 shows a compositional bias: gly residues.

The protein belongs to the universal ribosomal protein uL15 family. As to quaternary structure, part of the 50S ribosomal subunit.

In terms of biological role, binds to the 23S rRNA. The protein is Large ribosomal subunit protein uL15 of Caulobacter vibrioides (strain ATCC 19089 / CIP 103742 / CB 15) (Caulobacter crescentus).